The primary structure comprises 102 residues: Large ribosomal subunit protein P1 (102 aa).

The disordered stretch occupies residues 69 to 91 (APAAAAEEKKEEEKKEEKKEEDT). Residues 74 to 90 (AEEKKEEEKKEEKKEED) show a composition bias toward basic and acidic residues.

Belongs to the eukaryotic ribosomal protein P1/P2 family. As to quaternary structure, part of the 50S ribosomal subunit. Homodimer, it forms part of the ribosomal stalk which helps the ribosome interact with GTP-bound translation factors. Forms a heptameric uL10/P0(P1)2(P1)2(P1)2 complex, where uL10/P0 forms an elongated spine to which the P1 dimers bind in a sequential fashion.

Functionally, forms part of the ribosomal stalk, playing a central role in the interaction of the ribosome with GTP-bound translation factors. This Methanocaldococcus jannaschii (strain ATCC 43067 / DSM 2661 / JAL-1 / JCM 10045 / NBRC 100440) (Methanococcus jannaschii) protein is Large ribosomal subunit protein P1.